We begin with the raw amino-acid sequence, 234 residues long: Proteasome subunit alpha (234 aa).

It belongs to the peptidase T1A family. As to quaternary structure, the 20S proteasome core is composed of 14 alpha and 14 beta subunits that assemble into four stacked heptameric rings, resulting in a barrel-shaped structure. The two inner rings, each composed of seven catalytic beta subunits, are sandwiched by two outer rings, each composed of seven alpha subunits. The catalytic chamber with the active sites is on the inside of the barrel. Has a gated structure, the ends of the cylinder being occluded by the N-termini of the alpha-subunits. Is capped at one or both ends by the proteasome regulatory ATPase, PAN.

The protein resides in the cytoplasm. The formation of the proteasomal ATPase PAN-20S proteasome complex, via the docking of the C-termini of PAN into the intersubunit pockets in the alpha-rings, triggers opening of the gate for substrate entry. Interconversion between the open-gate and close-gate conformations leads to a dynamic regulation of the 20S proteasome proteolysis activity. In terms of biological role, component of the proteasome core, a large protease complex with broad specificity involved in protein degradation. This is Proteasome subunit alpha from Picrophilus torridus (strain ATCC 700027 / DSM 9790 / JCM 10055 / NBRC 100828 / KAW 2/3).